Consider the following 97-residue polypeptide: Putative septation protein SpoVG (97 aa).

It belongs to the SpoVG family.

Functionally, could be involved in septation. This Borreliella afzelii (strain PKo) (Borrelia afzelii) protein is Putative septation protein SpoVG.